The sequence spans 461 residues: NADP-specific glutamate dehydrogenase (461 aa).

K115 is a catalytic residue.

Belongs to the Glu/Leu/Phe/Val dehydrogenases family. In terms of assembly, homohexamer.

It carries out the reaction L-glutamate + NADP(+) + H2O = 2-oxoglutarate + NH4(+) + NADPH + H(+). The polypeptide is NADP-specific glutamate dehydrogenase (GDH) (Penicillium chrysogenum (Penicillium notatum)).